The primary structure comprises 106 residues: NADH-quinone oxidoreductase subunit K (106 aa).

Transmembrane regions (helical) follow at residues 8-28 (IGIE…VFGV), 35-55 (IIVF…FVAF), and 66-86 (VFVF…LAIL).

It belongs to the complex I subunit 4L family. In terms of assembly, NDH-1 is composed of 14 different subunits. Subunits NuoA, H, J, K, L, M, N constitute the membrane sector of the complex.

It localises to the cell inner membrane. It catalyses the reaction a quinone + NADH + 5 H(+)(in) = a quinol + NAD(+) + 4 H(+)(out). Its function is as follows. NDH-1 shuttles electrons from NADH, via FMN and iron-sulfur (Fe-S) centers, to quinones in the respiratory chain. The immediate electron acceptor for the enzyme in this species is believed to be a menaquinone. Couples the redox reaction to proton translocation (for every two electrons transferred, four hydrogen ions are translocated across the cytoplasmic membrane), and thus conserves the redox energy in a proton gradient. In Flavobacterium johnsoniae (strain ATCC 17061 / DSM 2064 / JCM 8514 / BCRC 14874 / CCUG 350202 / NBRC 14942 / NCIMB 11054 / UW101) (Cytophaga johnsonae), this protein is NADH-quinone oxidoreductase subunit K.